The chain runs to 287 residues: Merozoite surface protein 2 (287 aa).

Residues 1 to 20 (MKVIKTLSIINFFIFVTFNI) form the signal peptide. N-linked (GlcNAc...) asparagine glycans are attached at residues Asn-22 and Asn-36. Residues 42-248 (SMTESNPPTG…DSQKECTDGN (207 aa)) are disordered. Residues 44 to 213 (TESNPPTGAS…EQTESPELQS (170 aa)) form a polymorphic region region. Positions 54-112 (GSAGGSAGGSAGGSAGGSAGGSAGGSAGGSAGGSAGGSAGGSAGGSAGGSAGSGDGNGA) are enriched in gly residues. Repeat copies occupy residues 55–58 (SAGG), 59–62 (SAGG), 63–66 (SAGG), 67–70 (SAGG), 71–74 (SAGG), 75–78 (SAGG), 79–82 (SAGG), 83–86 (SAGG), 87–90 (SAGG), 91–94 (SAGG), 95–98 (SAGG), and 99–102 (SAGG). The 12 X 4 AA tandem repeats of S-A-G-G stretch occupies residues 55 to 102 (SAGGSAGGSAGGSAGGSAGGSAGGSAGGSAGGSAGGSAGGSAGGSAGG). Over residues 121–149 (SPSTPATTTTTTTTNDAEASTSTSSENPN) the composition is skewed to low complexity. 2 stretches are compositionally biased toward polar residues: residues 150–180 (HNNA…NVPP) and 187–215 (KSPT…QSAP). An N-linked (GlcNAc...) asparagine glycan is attached at Asn-164. Asn-236 carries an N-linked (GlcNAc...) asparagine glycan. Cys-244 and Cys-252 are oxidised to a cystine. Asn-260 and Asn-261 each carry an N-linked (GlcNAc...) asparagine glycan. Asn-261 carries GPI-anchor amidated asparagine lipidation. Residues 262–287 (SSNIASINKFVVLISATLVLSFAIFI) constitute a propeptide, removed in mature form.

It is found in the cell membrane. Its function is as follows. May play a role in the merozoite attachment to the erythrocyte. The polypeptide is Merozoite surface protein 2 (Plasmodium falciparum (isolate FCR-3 / Gambia)).